The chain runs to 519 residues: Circadian clock oscillator protein KaiC (519 aa).

2 KaiC domains span residues M1–F246 and V260–S519. ATP-binding residues include G48, T49, G50, K51, T52, L53, K223, L224, R225, T227, H229, T239, T289, G290, T291, G292, K293, T294, and L295. T52 provides a ligand contact to Mg(2+). T294 contributes to the Mg(2+) binding site. A Mg(2+)-binding site is contributed by E317. W330 contributes to the ATP binding site. Phosphoserine; by autocatalysis is present on S430. Phosphothreonine; by autocatalysis is present on T431. Residues R450, K456, M457, R458, S460, H462, and K464 each contribute to the ATP site.

The protein belongs to the KaiC family. In terms of assembly, homohexamer; hexamerization is dependent on ATP-binding. The KaiABC complex composition changes during the circadian cycle to control KaiC phosphorylation. Complexes KaiC(6), KaiA(2-4):KaiC(6), KaiB(6):KaiC(6) and KaiC(6):KaiB(6):KaiA(12) are among the most important forms, many form cooperatively. KaiC interacts with SasA, activating its autokinase function and leading to RpaA activation. It depends on Mg(2+) as a cofactor. Phosphorylated on serine and threonine residues by autocatalysis. Has a 4 step phosphorylation cycle; the autokinase acts first on Thr-431, then Ser-430. When Ser-430 is modified KaiC switches to an autophosphatase mode, acting first on phospho-Thr-431 then phospho-Ser-430.

The enzyme catalyses L-seryl-[protein] + ATP = O-phospho-L-seryl-[protein] + ADP + H(+). It carries out the reaction L-threonyl-[protein] + ATP = O-phospho-L-threonyl-[protein] + ADP + H(+). It catalyses the reaction ATP + H2O = ADP + phosphate + H(+). Its activity is regulated as follows. The interaction with KaiA enhances its phosphorylation status, while the interaction with KaiB decreases it. Functionally, central component of the KaiABC oscillator complex, which constitutes the main circadian regulator in cyanobacteria. Complex composition changes during the circadian cycle to control KaiC phosphorylation. KaiA stimulates KaiC autophosphorylation, while KaiB sequesters KaiA, leading to KaiC autodephosphorylation. Clock output pathways impact the RpaA transcriptional regulator. KaiC enhances the autophosphorylation activity of SasA, which then transfers its phosphate group to RpaA to activate it. KaiB and KaiC together enhance the phospho-RpaA dephosphatase activity of CikA. In terms of biological role, has a weak, temperature-independent ATPase activity; ATPase activity defines the circadian period. The phosphorylation state of KaiC modulates its ATPase activity and effects KaiB binding. This is Circadian clock oscillator protein KaiC from Nostoc sp. (strain PCC 7120 / SAG 25.82 / UTEX 2576).